A 116-amino-acid polypeptide reads, in one-letter code: Small ribosomal subunit protein bS18c (116 aa).

The span at 1-13 (MKPSFRNTSPSFR) shows a compositional bias: polar residues. A disordered region spans residues 1–51 (MKPSFRNTSPSFRNRSKPYFRNRSKPYFRNRSKPSFRNTSKRFSPNQQSFR). Residues 14-34 (NRSKPYFRNRSKPYFRNRSKP) are compositionally biased toward basic residues. Residues 35 to 49 (SFRNTSKRFSPNQQS) show a composition bias toward polar residues.

It belongs to the bacterial ribosomal protein bS18 family. In terms of assembly, part of the 30S ribosomal subunit.

The protein resides in the plastid. It is found in the chloroplast. The chain is Small ribosomal subunit protein bS18c from Cryptomeria japonica (Japanese cedar).